The sequence spans 463 residues: Tryprostatin B synthase (463 aa).

Residues Met-93 and Glu-101 each coordinate brevianamide F. Dimethylallyl diphosphate is bound by residues Arg-112, Lys-200, and Tyr-202. Residue Tyr-204 participates in brevianamide F binding. Positions 293, 295, 379, 381, 445, and 449 each coordinate dimethylallyl diphosphate.

It belongs to the tryptophan dimethylallyltransferase family.

It carries out the reaction brevianamide F + dimethylallyl diphosphate = tryprostatin B + diphosphate. The protein operates within mycotoxin biosynthesis. In terms of biological role, brevianamide F prenyltransferase; part of the gene cluster that mediates the biosynthesis of fumitremorgins, indole alkaloids that carry not only intriguing chemical structures, but also interesting biological and pharmacological activities. The biosynthesis of fumitremorgin-type alkaloids begins by condensation of the two amino acids L-tryptophan and L-proline to brevianamide F, catalyzed by the non-ribosomal peptide synthetase ftmPS/ftmA. Brevianamide F is then prenylated by the prenyltransferase ftmPT1/ftmB in the presence of dimethylallyl diphosphate, resulting in the formation of tryprostatin B. The three cytochrome P450 monooxygenases, ftmP450-1/ftmC, ftmP450-2/ftmE and ftmP450-3/FtmG, are responsible for the conversion of tryprostatin B to 6-hydroxytryprostatin B, tryprostatin A to fumitremorgin C and fumitremorgin C to 12,13-dihydroxyfumitremorgin C, respectively. The putative methyltransferase ftmMT/ftmD is expected for the conversion of 6-hydroxytryprostatin B to tryprostatin A. FtmPT2/FtmH catalyzes the prenylation of 12,13-dihydroxyfumitre-morgin C in the presence of dimethylallyl diphosphate, resulting in the formation of fumitremorgin B. Fumitremorgin B is further converted to verruculogen by ftmOx1/ftmF via the insertion of an endoperoxide bond between the two prenyl moieties. Finally, verruculogen is further converted to fumitremorgin A by the verruculogen prenyltransferase ftmPT3. In Neosartorya fischeri (strain ATCC 1020 / DSM 3700 / CBS 544.65 / FGSC A1164 / JCM 1740 / NRRL 181 / WB 181) (Aspergillus fischerianus), this protein is Tryprostatin B synthase.